A 169-amino-acid polypeptide reads, in one-letter code: Cytochrome c oxidase subunit 4 isoform 1, mitochondrial (169 aa).

Residues 1–22 constitute a mitochondrion transit peptide; it reads MLATRVFSLIGRRAISTSVCVR. Over 23–98 the chain is Mitochondrial matrix; it reads AHGSVVKSED…SFAEMNRSTN (76 aa). The residue at position 29 (lysine 29) is an N6-acetyllysine; alternate. The residue at position 29 (lysine 29) is an N6-succinyllysine; alternate. Lysine 53 is subject to N6-acetyllysine. 2 positions are modified to phosphoserine: serine 56 and serine 58. Lysine 60 carries the N6-acetyllysine; alternate modification. Lysine 60 bears the N6-succinyllysine; alternate mark. N6-acetyllysine is present on lysine 67. Residues 99-124 traverse the membrane as a helical segment; sequence EWKTVVGAAMFFIGFTALLLIWEKHY. The Mitochondrial intermembrane portion of the chain corresponds to 125–169; that stretch reads VYGPIPHTFEEEWVAKQTKRMLDMKVAPIQGFSAKWDYDKNEWKK.

Belongs to the cytochrome c oxidase IV family. As to quaternary structure, component of the cytochrome c oxidase (complex IV, CIV), a multisubunit enzyme composed of 14 subunits. The complex is composed of a catalytic core of 3 subunits MT-CO1, MT-CO2 and MT-CO3, encoded in the mitochondrial DNA, and 11 supernumerary subunits COX4I1 (or COX4I2), COX5A, COX5B, COX6A2 (or COX6A1), COX6B1 (or COX6B2), COX6C, COX7A1 (or COX7A2), COX7B, COX7C, COX8B and NDUFA4, which are encoded in the nuclear genome. The complex exists as a monomer or a dimer and forms supercomplexes (SCs) in the inner mitochondrial membrane with NADH-ubiquinone oxidoreductase (complex I, CI) and ubiquinol-cytochrome c oxidoreductase (cytochrome b-c1 complex, complex III, CIII), resulting in different assemblies (supercomplex SCI(1)III(2)IV(1) and megacomplex MCI(2)III(2)IV(2)). Interacts with PHB2; the interaction decreases in absence of SPHK2. Interacts with AFG1L. Interacts with ABCB7; this interaction allows the regulation of cellular iron homeostasis and cellular reactive oxygen species (ROS) levels in cardiomyocytes. Interacts with FLVCR2; this interaction occurs in the absence of heme and is disrupted upon heme binding. Interacts with IRGC.

The protein localises to the mitochondrion inner membrane. It participates in energy metabolism; oxidative phosphorylation. In terms of biological role, component of the cytochrome c oxidase, the last enzyme in the mitochondrial electron transport chain which drives oxidative phosphorylation. The respiratory chain contains 3 multisubunit complexes succinate dehydrogenase (complex II, CII), ubiquinol-cytochrome c oxidoreductase (cytochrome b-c1 complex, complex III, CIII) and cytochrome c oxidase (complex IV, CIV), that cooperate to transfer electrons derived from NADH and succinate to molecular oxygen, creating an electrochemical gradient over the inner membrane that drives transmembrane transport and the ATP synthase. Cytochrome c oxidase is the component of the respiratory chain that catalyzes the reduction of oxygen to water. Electrons originating from reduced cytochrome c in the intermembrane space (IMS) are transferred via the dinuclear copper A center (CU(A)) of subunit 2 and heme A of subunit 1 to the active site in subunit 1, a binuclear center (BNC) formed by heme A3 and copper B (CU(B)). The BNC reduces molecular oxygen to 2 water molecules using 4 electrons from cytochrome c in the IMS and 4 protons from the mitochondrial matrix. The chain is Cytochrome c oxidase subunit 4 isoform 1, mitochondrial (COX4I1) from Bos taurus (Bovine).